A 638-amino-acid chain; its full sequence is Phosphomethylpyrimidine synthase (638 aa).

Residues Asn-243, Met-272, Tyr-301, His-337, Ser-357–Gly-359, Asp-398–Arg-401, and Glu-437 contribute to the substrate site. His-441 contacts Zn(2+). Tyr-464 lines the substrate pocket. His-505 contacts Zn(2+). [4Fe-4S] cluster contacts are provided by Cys-585, Cys-588, and Cys-593.

The protein belongs to the ThiC family. In terms of assembly, homodimer. It depends on [4Fe-4S] cluster as a cofactor.

It catalyses the reaction 5-amino-1-(5-phospho-beta-D-ribosyl)imidazole + S-adenosyl-L-methionine = 4-amino-2-methyl-5-(phosphooxymethyl)pyrimidine + CO + 5'-deoxyadenosine + formate + L-methionine + 3 H(+). The protein operates within cofactor biosynthesis; thiamine diphosphate biosynthesis. Its function is as follows. Catalyzes the synthesis of the hydroxymethylpyrimidine phosphate (HMP-P) moiety of thiamine from aminoimidazole ribotide (AIR) in a radical S-adenosyl-L-methionine (SAM)-dependent reaction. The polypeptide is Phosphomethylpyrimidine synthase (Dechloromonas aromatica (strain RCB)).